Here is a 188-residue protein sequence, read N- to C-terminus: Adenine phosphoribosyltransferase (188 aa).

Belongs to the purine/pyrimidine phosphoribosyltransferase family. Homodimer.

It is found in the cytoplasm. The catalysed reaction is AMP + diphosphate = 5-phospho-alpha-D-ribose 1-diphosphate + adenine. It functions in the pathway purine metabolism; AMP biosynthesis via salvage pathway; AMP from adenine: step 1/1. Its function is as follows. Catalyzes a salvage reaction resulting in the formation of AMP, that is energically less costly than de novo synthesis. This is Adenine phosphoribosyltransferase from Burkholderia vietnamiensis (strain G4 / LMG 22486) (Burkholderia cepacia (strain R1808)).